A 600-amino-acid chain; its full sequence is Myelin expression factor 2 (600 aa).

Residues 1–101 form a disordered region; sequence MADANKAEVP…GEKKGPNRNR (101 aa). The residue at position 13 (Thr-13) is a Phosphothreonine. Ser-17 is subject to Phosphoserine. A compositionally biased stretch (basic and acidic residues) spans 27 to 42; sequence GEPRREPHPAEAEKQQ. Lys-53 is covalently cross-linked (Glycyl lysine isopeptide (Lys-Gly) (interchain with G-Cter in SUMO2)). 2 stretches are compositionally biased toward basic and acidic residues: residues 54–72 and 83–96; these read MEND…EKST and YSKD…EKKG. RRM domains follow at residues 100 to 178 and 233 to 310; these read NRVF…EDPD and STIF…MDDK. Arg-406 bears the Omega-N-methylarginine mark. Ser-431 carries the phosphoserine modification. Residues 523–599 enclose the RRM 3 domain; the sequence is NQIFVRNLPF…REIDVRLDRN (77 aa).

As to quaternary structure, monomer.

It localises to the nucleus. Transcriptional repressor of the myelin basic protein gene (MBP). Binds to the proximal MB1 element 5'-TTGTCC-3' of the MBP promoter. Its binding to MB1 and function are inhibited by PURA. The sequence is that of Myelin expression factor 2 (MYEF2) from Homo sapiens (Human).